The sequence spans 357 residues: Protein AAR2 homolog (357 aa).

It belongs to the AAR2 family.

The sequence is that of Protein AAR2 homolog from Caenorhabditis elegans.